Here is a 1364-residue protein sequence, read N- to C-terminus: Collagen alpha-2(I) chain (1364 aa).

A signal peptide spans 1–22; it reads MLSFVDTRTLLLLAVTSCLATC. The residue at position 23 (glutamine 23) is a Pyrrolidone carboxylic acid. The propeptide at 23–79 is N-terminal propeptide; sequence QSLQEATARKGPSGDRGPRGERGPPGPPGRDGDDGIPGPPGPPGPPGPPGLGGNFAA. A disordered region spans residues 26-1128; the sequence is QEATARKGPS…QPRSPTSLRP (1103 aa). Basic and acidic residues predominate over residues 34-44; it reads PSGDRGPRGER. Residues 59 to 71 show a composition bias toward pro residues; the sequence is PGPPGPPGPPGPP. Residue glutamine 80 is modified to Pyrrolidone carboxylic acid. Allysine is present on lysine 84. Residues 93–130 are compositionally biased toward low complexity; the sequence is LMGPRGPPGASGAPGPQGFQGPPGEPGEPGQTGPAGAR. 4-hydroxyproline occurs at positions 100, 106, 115, 118, 121, 133, 136, 145, 151, 166, 169, and 172. Residues 139–153 show a composition bias toward basic and acidic residues; that stretch reads AGEDGHPGKPGRPGE. At lysine 175 the chain carries 5-hydroxylysine; alternate. Lysine 175 is a glycosylation site (O-linked (Gal...) hydroxylysine; alternate). Proline 190 and proline 193 each carry 4-hydroxyproline. Lysine 196 is modified (5-hydroxylysine). Proline 199, proline 202, proline 208, proline 217, proline 226, proline 253, proline 256, and proline 259 each carry 4-hydroxyproline. Over residues 223–252 the composition is skewed to low complexity; the sequence is VGAPGPAGARGSDGSVGPVGPAGPIGSAGP. Position 262 is a 5-hydroxylysine (lysine 262). Proline 271, proline 286, proline 295, and proline 304 each carry 4-hydroxyproline. Low complexity predominate over residues 277–291; sequence AGPRGEVGLPGLSGP. A compositionally biased stretch (low complexity) spans 298–319; sequence PGANGLPGAKGAAGLPGVAGAP. Lysine 307 is modified (5-hydroxylysine). 4-hydroxyproline occurs at positions 313, 319, 322, 328, and 346. Over residues 328-343 the composition is skewed to low complexity; it reads PGPVGAAGATGARGLV. A 5-hydroxylysine modification is found at lysine 352. 4-hydroxyproline is present on residues proline 361, proline 367, proline 370, proline 391, proline 394, proline 400, proline 406, proline 439, and proline 442. Over residues 396 to 406 the composition is skewed to low complexity; the sequence is LRGNPGSRGLP. 2 stretches are compositionally biased toward low complexity: residues 468–487 and 511–535; these read LPGIDGRPGPIGPAGARGEP and AGLAGARGAPGPDGNNGAQGPPGLQ. Residues 536 to 545 are compositionally biased toward gly residues; that stretch reads GVQGGKGEQG. Low complexity-rich tracts occupy residues 592-609, 621-643, 666-688, and 715-735; these read PGESGAAGPTGPIGSRGP, EPGVVGAPGTAGPSGPSGLPGER, SPGRDGARGAPGAIGAPGPAGAN, and VGPAGPNGFAGPAGAAGQPGA. The span at 736-745 shows a compositional bias: basic and acidic residues; sequence KGERGTKGPK. Low complexity predominate over residues 748–763; the sequence is NGPVGPTGPVGAAGPS. Positions 773 to 782 are enriched in gly residues; the sequence is GSRGDGGPPG. 5 stretches are compositionally biased toward low complexity: residues 783–793, 861–874, 891–930, 948–961, and 978–999; these read ATGFPGAAGRT, PQGLLGAPGFLGLP, EPGPLGIAGPPGARGPPGNVGNPGVNGAPGEAGRDGNPGN, YPGNAGPVGAAGAP, and EPGPAGAVGPAGAVGPRGPSGP. A compositionally biased stretch (basic and acidic residues) spans 1003-1014; that stretch reads RGDKGEPGDKGP. Residues 1087 to 1101 are compositionally biased toward pro residues; it reads AGPPGPPGPPGPPGP. A propeptide spans 1118–1364 (C-terminal propeptide); it reads DQPRSPTSLR…RLNIGPVCFK (247 aa). Residues 1131–1364 form the Fibrillar collagen NC1 domain; that stretch reads YEVDATLKSL…RLNIGPVCFK (234 aa). Cystine bridges form between cysteine 1161/cysteine 1193, cysteine 1201/cysteine 1362, and cysteine 1270/cysteine 1315. Positions 1179, 1181, 1182, 1184, and 1187 each coordinate Ca(2+). The N-linked (GlcNAc...) asparagine glycan is linked to asparagine 1265.

This sequence belongs to the fibrillar collagen family. In terms of assembly, trimers of one alpha 2(I) and two alpha 1(I) chains. Interacts (via C-terminus) with TMEM131 (via PapD-L domain); the interaction is direct and is involved in assembly and TRAPPIII ER-to-Golgi transport complex-dependent secretion of collagen. Prolines at the third position of the tripeptide repeating unit (G-X-Y) are hydroxylated in some or all of the chains. As to expression, forms the fibrils of tendon, ligaments and bones. In bones the fibrils are mineralized with calcium hydroxyapatite.

The protein resides in the secreted. It is found in the extracellular space. The protein localises to the extracellular matrix. Functionally, type I collagen is a member of group I collagen (fibrillar forming collagen). The polypeptide is Collagen alpha-2(I) chain (COL1A2) (Bos taurus (Bovine)).